Here is a 321-residue protein sequence, read N- to C-terminus: Aspartate carbamoyltransferase catalytic subunit (321 aa).

Carbamoyl phosphate is bound by residues R65 and T66. K93 serves as a coordination point for L-aspartate. Carbamoyl phosphate-binding residues include R115, H143, and Q146. 2 residues coordinate L-aspartate: R176 and R230. Carbamoyl phosphate is bound by residues G271 and P272.

It belongs to the aspartate/ornithine carbamoyltransferase superfamily. ATCase family. As to quaternary structure, heterododecamer (2C3:3R2) of six catalytic PyrB chains organized as two trimers (C3), and six regulatory PyrI chains organized as three dimers (R2).

The catalysed reaction is carbamoyl phosphate + L-aspartate = N-carbamoyl-L-aspartate + phosphate + H(+). Its pathway is pyrimidine metabolism; UMP biosynthesis via de novo pathway; (S)-dihydroorotate from bicarbonate: step 2/3. Its function is as follows. Catalyzes the condensation of carbamoyl phosphate and aspartate to form carbamoyl aspartate and inorganic phosphate, the committed step in the de novo pyrimidine nucleotide biosynthesis pathway. In Bartonella henselae (strain ATCC 49882 / DSM 28221 / CCUG 30454 / Houston 1) (Rochalimaea henselae), this protein is Aspartate carbamoyltransferase catalytic subunit.